Reading from the N-terminus, the 131-residue chain is Profilin (131 aa).

Belongs to the profilin family. In terms of assembly, occurs in many kinds of cells as a complex with monomeric actin in a 1:1 ratio.

The protein resides in the cytoplasm. It is found in the cytoskeleton. Binds to actin and affects the structure of the cytoskeleton. At high concentrations, profilin prevents the polymerization of actin, whereas it enhances it at low concentrations. By binding to PIP2, it inhibits the formation of IP3 and DG. This chain is Profilin, found in Prunus avium (Cherry).